The primary structure comprises 329 residues: Ribosome biogenesis regulatory protein homolog (329 aa).

Disordered regions lie at residues 227–248 (KANI…VSAE) and 262–329 (KKAK…NKRK). Positions 278–295 (LREKKEKQEKKGAKEATR) are enriched in basic and acidic residues. A compositionally biased stretch (basic residues) spans 320 to 329 (AKKKGANKRK).

It belongs to the RRS1 family.

Its subcellular location is the nucleus. The protein resides in the nucleolus. In terms of biological role, involved in ribosomal large subunit assembly. The protein is Ribosome biogenesis regulatory protein homolog of Caenorhabditis briggsae.